A 124-amino-acid polypeptide reads, in one-letter code: Fluoride-specific ion channel FluC (124 aa).

The next 4 helical transmembrane spans lie at 4–24, 35–55, 67–87, and 96–116; these read IVLLGLAGALGSLARYGLAGL, LGTFIVNVLGCLAFGFVWGVC, VVLLTGFMGAFTTFSTFTFES, and WLAFALYAGGQLLLGLALLWL. Positions 75 and 78 each coordinate Na(+).

This sequence belongs to the fluoride channel Fluc/FEX (TC 1.A.43) family.

Its subcellular location is the cell inner membrane. The enzyme catalyses fluoride(in) = fluoride(out). Na(+) is not transported, but it plays an essential structural role and its presence is essential for fluoride channel function. Fluoride-specific ion channel. Important for reducing fluoride concentration in the cell, thus reducing its toxicity. The protein is Fluoride-specific ion channel FluC of Nitratidesulfovibrio vulgaris (strain DSM 19637 / Miyazaki F) (Desulfovibrio vulgaris).